The following is a 114-amino-acid chain: Aspartate 1-decarboxylase (114 aa).

The active-site Schiff-base intermediate with substrate; via pyruvic acid is the Ser-25. Pyruvic acid (Ser) is present on Ser-25. Thr-57 is a binding site for substrate. The active-site Proton donor is the Tyr-58. Position 71 to 73 (71 to 73 (GAA)) interacts with substrate.

It belongs to the PanD family. In terms of assembly, heterooctamer of four alpha and four beta subunits. Pyruvate serves as cofactor. Is synthesized initially as an inactive proenzyme, which is activated by self-cleavage at a specific serine bond to produce a beta-subunit with a hydroxyl group at its C-terminus and an alpha-subunit with a pyruvoyl group at its N-terminus.

The protein localises to the cytoplasm. It carries out the reaction L-aspartate + H(+) = beta-alanine + CO2. It participates in cofactor biosynthesis; (R)-pantothenate biosynthesis; beta-alanine from L-aspartate: step 1/1. Catalyzes the pyruvoyl-dependent decarboxylation of aspartate to produce beta-alanine. The sequence is that of Aspartate 1-decarboxylase from Haloquadratum walsbyi (strain DSM 16790 / HBSQ001).